Consider the following 204-residue polypeptide: High frequency lysogenization protein HflD homolog (204 aa).

The protein belongs to the HflD family.

The protein resides in the cytoplasm. Its subcellular location is the cell inner membrane. The sequence is that of High frequency lysogenization protein HflD homolog from Shewanella sediminis (strain HAW-EB3).